A 472-amino-acid chain; its full sequence is Adenosylhomocysteinase (472 aa).

Residues T62, D137, and E197 each contribute to the substrate site. NAD(+) is bound at residue 198–200 (TTT). The substrate site is built by K227 and D231. NAD(+) contacts are provided by residues N232, 261–266 (GYGDVG), E284, N319, 340–342 (IGH), and N385.

The protein belongs to the adenosylhomocysteinase family. Requires NAD(+) as cofactor.

It localises to the cytoplasm. It carries out the reaction S-adenosyl-L-homocysteine + H2O = L-homocysteine + adenosine. It functions in the pathway amino-acid biosynthesis; L-homocysteine biosynthesis; L-homocysteine from S-adenosyl-L-homocysteine: step 1/1. May play a key role in the regulation of the intracellular concentration of adenosylhomocysteine. The chain is Adenosylhomocysteinase from Bordetella pertussis (strain Tohama I / ATCC BAA-589 / NCTC 13251).